The chain runs to 165 residues: Nucleotide-binding protein TGRD_519 (165 aa).

It belongs to the YajQ family.

In terms of biological role, nucleotide-binding protein. This is Nucleotide-binding protein TGRD_519 from Endomicrobium trichonymphae.